The sequence spans 392 residues: Stilbene synthase 6 (392 aa).

55–58 (KFNR) lines the substrate pocket. Residue Cys164 is part of the active site. Residues Leu267 and 305–307 (GGP) each bind substrate.

Belongs to the thiolase-like superfamily. Chalcone/stilbene synthases family. In terms of assembly, homodimer.

It localises to the cytoplasm. The enzyme catalyses 4-coumaroyl-CoA + 3 malonyl-CoA + 3 H(+) = trans-resveratrol + 4 CO2 + 4 CoA. It functions in the pathway phytoalexin biosynthesis; 3,4',5-trihydroxystilbene biosynthesis; 3,4',5-trihydroxystilbene from trans-4-coumarate: step 2/2. Functionally, mediates resistance to pathogens which are sensitive to stilbenes. This chain is Stilbene synthase 6 (STS), found in Vitis vinifera (Grape).